The primary structure comprises 144 residues: Protein cornichon homolog 1 (144 aa).

Topologically, residues 1–10 (MAFTFAAFCY) are cytoplasmic. Residues 11-31 (MLALLLTATLIFFAIWHIIAF) traverse the membrane as a helical segment. Topologically, residues 32–56 (DELKTDYKNPIDQCNTLNPLVLPEY) are lumenal. Residues 57–77 (LIHAFFCVMFLCAAEWLTLGL) traverse the membrane as a helical segment. The Cytoplasmic segment spans residues 78 to 122 (NMPLLAYHIWRYMSRPVMSGPGLYDPTTIMNADILAYCQKEGWCK). The chain crosses the membrane as a helical span at residues 123–143 (LAFYLLAFFYYLYGMIYVLVS). Residue S144 is a topological domain, lumenal.

Belongs to the cornichon family. In terms of assembly, interacts with AREG immature precursor and with immature TGFA, i.e. with a prosegment and lacking full N-glycosylation, but not with the fully N-glycosylated form. In the Golgi apparatus, may form a complex with GORASP55 and transmembrane TGFA.

The protein resides in the endoplasmic reticulum membrane. It is found in the golgi apparatus membrane. Functionally, involved in the selective transport and maturation of TGF-alpha family proteins. This Pongo abelii (Sumatran orangutan) protein is Protein cornichon homolog 1 (CNIH1).